Reading from the N-terminus, the 209-residue chain is UPF0319 protein VF_1616 (209 aa).

An N-terminal signal peptide occupies residues 1 to 21; that stretch reads MKIQSIFAASFCLLSSISAHA.

It belongs to the UPF0319 family.

In Aliivibrio fischeri (strain ATCC 700601 / ES114) (Vibrio fischeri), this protein is UPF0319 protein VF_1616.